A 239-amino-acid polypeptide reads, in one-letter code: MAKLGVNIDHVATIRQARGGVEPDPVAAAAIAEFAGADGITVHLREDRRHIQDRDLRLLRQTVKTKLNLEMAATDEMVGIALSVKPDMCTLVPERRQELTTEGGLDVRVGMQALADAIGRLQDGGIVVSLFIDPDADQVKASSKVGADYIEIHTGTFAEAREWKKEQAELERIENAIKLGTKLGLGINAGHGLNYTNVRKVAALGGIEEFNIGHSIISRAVFTGLDRAVRDMVDLVKYA.

A 3-amino-2-oxopropyl phosphate-binding site is contributed by Asn-7. 9-10 contacts 1-deoxy-D-xylulose 5-phosphate; that stretch reads DH. Arg-18 is a binding site for 3-amino-2-oxopropyl phosphate. The Proton acceptor role is filled by His-43. 1-deoxy-D-xylulose 5-phosphate contacts are provided by Arg-45 and His-50. Residue Glu-70 is the Proton acceptor of the active site. Thr-100 contributes to the 1-deoxy-D-xylulose 5-phosphate binding site. His-191 serves as the catalytic Proton donor. Residues Gly-192 and 213 to 214 contribute to the 3-amino-2-oxopropyl phosphate site; that span reads GH.

This sequence belongs to the PNP synthase family. In terms of assembly, homooctamer; tetramer of dimers.

It localises to the cytoplasm. It catalyses the reaction 3-amino-2-oxopropyl phosphate + 1-deoxy-D-xylulose 5-phosphate = pyridoxine 5'-phosphate + phosphate + 2 H2O + H(+). The protein operates within cofactor biosynthesis; pyridoxine 5'-phosphate biosynthesis; pyridoxine 5'-phosphate from D-erythrose 4-phosphate: step 5/5. Functionally, catalyzes the complicated ring closure reaction between the two acyclic compounds 1-deoxy-D-xylulose-5-phosphate (DXP) and 3-amino-2-oxopropyl phosphate (1-amino-acetone-3-phosphate or AAP) to form pyridoxine 5'-phosphate (PNP) and inorganic phosphate. In Geobacter sulfurreducens (strain ATCC 51573 / DSM 12127 / PCA), this protein is Pyridoxine 5'-phosphate synthase.